The sequence spans 396 residues: MELDHRTSGGLHAYPGPRGGQVAKPNVILQIGKCRAEMLEHVRRTHRHLLAEVSKQVERELKGLHRSVGKLESNLDGYVPTSDSQRWKKSIKACLCRCQETIANLERWVKREMHVWREVFYRLERWADRLESTGGKYPVGSESARHTVSVGVGGPESYCHEADGYDYTVSPYAITPPPAAGELPGQEPAEAQQYQPWVPGEDGQPSPGVDTQIFEDPREFLSHLEEYLRQVGGSEEYWLSQIQNHMNGPAKKWWEFKQGSVKNWVEFKKEFLQYSEGTLSREAIQRELDLPQKQGEPLDQFLWRKRDLYQTLYVDADEEEIIQYVVGTLQPKLKRFLRHPLPKTLEQLIQRGMEVQDDLEQAAEPAGPHLPVEDEAETLTPAPNSESVASDRTQPE.

Residues 54–78 (SKQVERELKGLHRSVGKLESNLDGY) adopt a coiled-coil conformation. The tract at residues 89-100 (KSIKACLCRCQE) is interaction with SH3GL1 or SH3GL3. An interaction with DNM2 region spans residues 195 to 214 (QPWVPGEDGQPSPGVDTQIF). S260 carries the phosphoserine modification. Glycyl lysine isopeptide (Lys-Gly) (interchain with G-Cter in ubiquitin) cross-links involve residues K268 and K269. At T278 the chain carries Phosphothreonine. The segment at 356–396 (QDDLEQAAEPAGPHLPVEDEAETLTPAPNSESVASDRTQPE) is disordered. Positions 381–396 (PAPNSESVASDRTQPE) are enriched in polar residues.

This sequence belongs to the ARC/ARG3.1 family. Homooligomer; homooligomerizes into virion-like capsids. Interacts with SH3GL1/endophilin-2, SH3GL3/endophilin-3 and DNM2/DYN2. Interacts with CAMK2B (in the kinase inactive state); leading to target ARC to inactive synapses. Interacts with PSEN1. Post-translationally, palmitoylation anchors the protein into the membrane by allowing direct insertion into the hydrophobic core of the lipid bilayer. Ubiquitinated by UBE3A, leading to its degradation by the proteasome, thereby promoting AMPA receptors (AMPARs) expression at synapses. Ubiquitinated by RNF216 at Lys-268 and Lys-269 limiting ARC protein levels induced by synaptic activity and thus regulating ARC-dependent forms of synaptic plasticity. In terms of processing, phosphorylation at Ser-260 by CaMK2 prevents homooligomerization into virion-like capsids by disrupting an interaction surface essential for high-order oligomerization. Phosphorylation by CaMK2 inhibits synaptic activity.

The protein localises to the extracellular vesicle membrane. It localises to the postsynaptic cell membrane. The protein resides in the synapse. Its subcellular location is the postsynaptic density. It is found in the early endosome membrane. The protein localises to the cell projection. It localises to the dendrite. The protein resides in the cytoplasm. Its subcellular location is the cytoskeleton. It is found in the cell cortex. The protein localises to the dendritic spine. It localises to the cytoplasmic vesicle. The protein resides in the secretory vesicle. Its subcellular location is the acrosome. It is found in the clathrin-coated vesicle membrane. Master regulator of synaptic plasticity that self-assembles into virion-like capsids that encapsulate RNAs and mediate intercellular RNA transfer in the nervous system. ARC protein is released from neurons in extracellular vesicles that mediate the transfer of ARC mRNA into new target cells, where ARC mRNA can undergo activity-dependent translation. ARC capsids are endocytosed and are able to transfer ARC mRNA into the cytoplasm of neurons. Acts as a key regulator of synaptic plasticity: required for protein synthesis-dependent forms of long-term potentiation (LTP) and depression (LTD) and for the formation of long-term memory. Regulates synaptic plasticity by promoting endocytosis of AMPA receptors (AMPARs) in response to synaptic activity: this endocytic pathway maintains levels of surface AMPARs in response to chronic changes in neuronal activity through synaptic scaling, thereby contributing to neuronal homeostasis. Acts as a postsynaptic mediator of activity-dependent synapse elimination in the developing cerebellum by mediating elimination of surplus climbing fiber synapses. Accumulates at weaker synapses, probably to prevent their undesired enhancement. This suggests that ARC-containing virion-like capsids may be required to eliminate synaptic material. Required to transduce experience into long-lasting changes in visual cortex plasticity and for long-term memory. Involved in postsynaptic trafficking and processing of amyloid-beta A4 (APP) via interaction with PSEN1. In addition to its role in synapses, also involved in the regulation of the immune system: specifically expressed in skin-migratory dendritic cells and regulates fast dendritic cell migration, thereby regulating T-cell activation. The sequence is that of Activity-regulated cytoskeleton-associated protein from Homo sapiens (Human).